Reading from the N-terminus, the 701-residue chain is Polyribonucleotide nucleotidyltransferase (701 aa).

Positions 487 and 493 each coordinate Mg(2+). Residues 554 to 613 (PTMIAMKIDTDKIRDVIGKGGATIRAICEETKASIDIEDDGSIKIFGETKEAADAAKQRI) form the KH domain. The 69-residue stretch at 623–691 (GKIYVGKVER…NRGRIKLSIK (69 aa)) folds into the S1 motif domain.

It belongs to the polyribonucleotide nucleotidyltransferase family. As to quaternary structure, component of the RNA degradosome, which is a multiprotein complex involved in RNA processing and mRNA degradation. Mg(2+) serves as cofactor.

It localises to the cytoplasm. It catalyses the reaction RNA(n+1) + phosphate = RNA(n) + a ribonucleoside 5'-diphosphate. Functionally, involved in mRNA degradation. Catalyzes the phosphorolysis of single-stranded polyribonucleotides processively in the 3'- to 5'-direction. This is Polyribonucleotide nucleotidyltransferase from Pseudomonas entomophila (strain L48).